We begin with the raw amino-acid sequence, 342 residues long: L-threonine 3-dehydrogenase (342 aa).

Residue Cys38 coordinates Zn(2+). Catalysis depends on charge relay system residues Thr40 and His43. His63, Glu64, Cys93, Cys96, Cys99, and Cys107 together coordinate Zn(2+). NAD(+)-binding positions include Ile175, Asp195, Arg200, 262–264 (LGL), and 286–287 (IY).

This sequence belongs to the zinc-containing alcohol dehydrogenase family. Homotetramer. The cofactor is Zn(2+).

It localises to the cytoplasm. The enzyme catalyses L-threonine + NAD(+) = (2S)-2-amino-3-oxobutanoate + NADH + H(+). The protein operates within amino-acid degradation; L-threonine degradation via oxydo-reductase pathway; glycine from L-threonine: step 1/2. Its function is as follows. Catalyzes the NAD(+)-dependent oxidation of L-threonine to 2-amino-3-ketobutyrate. In Streptomyces coelicolor (strain ATCC BAA-471 / A3(2) / M145), this protein is L-threonine 3-dehydrogenase.